The chain runs to 224 residues: Large ribosomal subunit protein bL25 (224 aa).

The segment at 195–224 (TVEEVDEAAEVDAADVPATEQGTDESKDGE) is disordered. A compositionally biased stretch (acidic residues) spans 197–207 (EEVDEAAEVDA).

It belongs to the bacterial ribosomal protein bL25 family. CTC subfamily. Part of the 50S ribosomal subunit; part of the 5S rRNA/L5/L18/L25 subcomplex. Contacts the 5S rRNA. Binds to the 5S rRNA independently of L5 and L18.

Its function is as follows. This is one of the proteins that binds to the 5S RNA in the ribosome where it forms part of the central protuberance. The sequence is that of Large ribosomal subunit protein bL25 from Psychrobacter cryohalolentis (strain ATCC BAA-1226 / DSM 17306 / VKM B-2378 / K5).